A 226-amino-acid polypeptide reads, in one-letter code: Phosphoribosylformylglycinamidine synthase subunit PurQ (226 aa).

The region spanning 2-226 (KIAVIVFPGS…LENGTVIAEG (225 aa)) is the Glutamine amidotransferase type-1 domain. Cysteine 86 (nucleophile) is an active-site residue. Residues histidine 195 and glutamate 197 contribute to the active site.

In terms of assembly, part of the FGAM synthase complex composed of 1 PurL, 1 PurQ and 2 PurS subunits.

The protein resides in the cytoplasm. The enzyme catalyses N(2)-formyl-N(1)-(5-phospho-beta-D-ribosyl)glycinamide + L-glutamine + ATP + H2O = 2-formamido-N(1)-(5-O-phospho-beta-D-ribosyl)acetamidine + L-glutamate + ADP + phosphate + H(+). The catalysed reaction is L-glutamine + H2O = L-glutamate + NH4(+). It participates in purine metabolism; IMP biosynthesis via de novo pathway; 5-amino-1-(5-phospho-D-ribosyl)imidazole from N(2)-formyl-N(1)-(5-phospho-D-ribosyl)glycinamide: step 1/2. Part of the phosphoribosylformylglycinamidine synthase complex involved in the purines biosynthetic pathway. Catalyzes the ATP-dependent conversion of formylglycinamide ribonucleotide (FGAR) and glutamine to yield formylglycinamidine ribonucleotide (FGAM) and glutamate. The FGAM synthase complex is composed of three subunits. PurQ produces an ammonia molecule by converting glutamine to glutamate. PurL transfers the ammonia molecule to FGAR to form FGAM in an ATP-dependent manner. PurS interacts with PurQ and PurL and is thought to assist in the transfer of the ammonia molecule from PurQ to PurL. This Limosilactobacillus fermentum (strain NBRC 3956 / LMG 18251) (Lactobacillus fermentum) protein is Phosphoribosylformylglycinamidine synthase subunit PurQ.